A 144-amino-acid chain; its full sequence is D-aminoacyl-tRNA deacylase (144 aa).

The Gly-cisPro motif, important for rejection of L-amino acids motif lies at 136 to 137 (GP).

This sequence belongs to the DTD family. Homodimer.

It localises to the cytoplasm. The enzyme catalyses glycyl-tRNA(Ala) + H2O = tRNA(Ala) + glycine + H(+). It carries out the reaction a D-aminoacyl-tRNA + H2O = a tRNA + a D-alpha-amino acid + H(+). An aminoacyl-tRNA editing enzyme that deacylates mischarged D-aminoacyl-tRNAs. Also deacylates mischarged glycyl-tRNA(Ala), protecting cells against glycine mischarging by AlaRS. Acts via tRNA-based rather than protein-based catalysis; rejects L-amino acids rather than detecting D-amino acids in the active site. By recycling D-aminoacyl-tRNA to D-amino acids and free tRNA molecules, this enzyme counteracts the toxicity associated with the formation of D-aminoacyl-tRNA entities in vivo and helps enforce protein L-homochirality. The chain is D-aminoacyl-tRNA deacylase from Actinobacillus succinogenes (strain ATCC 55618 / DSM 22257 / CCUG 43843 / 130Z).